The chain runs to 1016 residues: S-layer protein A (1016 aa).

The first 30 residues, 1 to 30 (MDLSTKKVISAGLVFIYALSLAMLVPMFLA), serve as a signal peptide directing secretion.

The protein belongs to the Sulfolobales SlaA family. The mushroom-shaped unit cells of the Sulfolobales' S-layers may consist of three SlaB subunits and six SlaA subunits.

It localises to the secreted. The protein localises to the cell wall. Its subcellular location is the S-layer. S-layer large protein. May form the highly ordered outer sheath. In Acidianus ambivalens (Desulfurolobus ambivalens), this protein is S-layer protein A.